The primary structure comprises 356 residues: Uroporphyrinogen decarboxylase (356 aa).

Substrate-binding positions include 27–31, aspartate 77, tyrosine 154, serine 209, and histidine 327; that span reads RQAGR.

It belongs to the uroporphyrinogen decarboxylase family. Homodimer.

The protein localises to the cytoplasm. It catalyses the reaction uroporphyrinogen III + 4 H(+) = coproporphyrinogen III + 4 CO2. It functions in the pathway porphyrin-containing compound metabolism; protoporphyrin-IX biosynthesis; coproporphyrinogen-III from 5-aminolevulinate: step 4/4. Its function is as follows. Catalyzes the decarboxylation of four acetate groups of uroporphyrinogen-III to yield coproporphyrinogen-III. The sequence is that of Uroporphyrinogen decarboxylase from Aromatoleum aromaticum (strain DSM 19018 / LMG 30748 / EbN1) (Azoarcus sp. (strain EbN1)).